The following is a 129-amino-acid chain: Small ribosomal subunit protein uS11 (129 aa).

Belongs to the universal ribosomal protein uS11 family. As to quaternary structure, part of the 30S ribosomal subunit. Interacts with proteins S7 and S18. Binds to IF-3.

Functionally, located on the platform of the 30S subunit, it bridges several disparate RNA helices of the 16S rRNA. Forms part of the Shine-Dalgarno cleft in the 70S ribosome. The protein is Small ribosomal subunit protein uS11 of Methylobacterium sp. (strain 4-46).